A 633-amino-acid polypeptide reads, in one-letter code: DNA mismatch repair protein MutL (633 aa).

The protein belongs to the DNA mismatch repair MutL/HexB family.

Functionally, this protein is involved in the repair of mismatches in DNA. It is required for dam-dependent methyl-directed DNA mismatch repair. May act as a 'molecular matchmaker', a protein that promotes the formation of a stable complex between two or more DNA-binding proteins in an ATP-dependent manner without itself being part of a final effector complex. This is DNA mismatch repair protein MutL from Pseudomonas putida (strain W619).